A 191-amino-acid chain; its full sequence is Dephospho-CoA kinase (191 aa).

Residues 3–191 form the DPCK domain; it reads AIGITGSYAS…KLILVIARKL (189 aa). Position 11–16 (11–16) interacts with ATP; the sequence is ASGKTF.

The protein belongs to the CoaE family.

It is found in the cytoplasm. It catalyses the reaction 3'-dephospho-CoA + ATP = ADP + CoA + H(+). The protein operates within cofactor biosynthesis; coenzyme A biosynthesis; CoA from (R)-pantothenate: step 5/5. Its function is as follows. Catalyzes the phosphorylation of the 3'-hydroxyl group of dephosphocoenzyme A to form coenzyme A. The sequence is that of Dephospho-CoA kinase from Rickettsia felis (strain ATCC VR-1525 / URRWXCal2) (Rickettsia azadi).